The primary structure comprises 160 residues: 3-hydroxyacyl-[acyl-carrier-protein] dehydratase FabZ (160 aa).

H58 is an active-site residue.

This sequence belongs to the thioester dehydratase family. FabZ subfamily.

The protein resides in the cytoplasm. The enzyme catalyses a (3R)-hydroxyacyl-[ACP] = a (2E)-enoyl-[ACP] + H2O. In terms of biological role, involved in unsaturated fatty acids biosynthesis. Catalyzes the dehydration of short chain beta-hydroxyacyl-ACPs and long chain saturated and unsaturated beta-hydroxyacyl-ACPs. This Ruegeria sp. (strain TM1040) (Silicibacter sp.) protein is 3-hydroxyacyl-[acyl-carrier-protein] dehydratase FabZ.